The chain runs to 315 residues: Ankyrin repeat domain-containing protein EMB506, chloroplastic (315 aa).

The N-terminal 39 residues, Met-1–Arg-39, are a transit peptide targeting the chloroplast. Positions Lys-44 to Gln-65 are enriched in polar residues. A disordered region spans residues Lys-44 to Ser-106. Residues Glu-72–Asp-104 show a composition bias toward acidic residues. 5 ANK repeats span residues Lys-151 to Asp-180, Asp-184 to Leu-213, Asp-217 to Val-246, Glu-250 to Arg-279, and Asp-283 to Leu-307.

As to quaternary structure, interacts with AKR. No homodimerization observed. In terms of tissue distribution, expressed in roots, inflorescence stems, flowers, siliques, dry seeds and mature cauline leaves.

The protein localises to the plastid. It is found in the chloroplast. Involved in the initial differentiation of the proplastid during the embryo development. Also required for correct cotyledon, true leaf and cauline leaf margin development. In Arabidopsis thaliana (Mouse-ear cress), this protein is Ankyrin repeat domain-containing protein EMB506, chloroplastic (EMB506).